We begin with the raw amino-acid sequence, 182 residues long: ATP synthase subunit delta (182 aa).

Belongs to the ATPase delta chain family. As to quaternary structure, F-type ATPases have 2 components, F(1) - the catalytic core - and F(0) - the membrane proton channel. F(1) has five subunits: alpha(3), beta(3), gamma(1), delta(1), epsilon(1). F(0) has three main subunits: a(1), b(2) and c(10-14). The alpha and beta chains form an alternating ring which encloses part of the gamma chain. F(1) is attached to F(0) by a central stalk formed by the gamma and epsilon chains, while a peripheral stalk is formed by the delta and b chains.

Its subcellular location is the cell inner membrane. F(1)F(0) ATP synthase produces ATP from ADP in the presence of a proton or sodium gradient. F-type ATPases consist of two structural domains, F(1) containing the extramembraneous catalytic core and F(0) containing the membrane proton channel, linked together by a central stalk and a peripheral stalk. During catalysis, ATP synthesis in the catalytic domain of F(1) is coupled via a rotary mechanism of the central stalk subunits to proton translocation. Its function is as follows. This protein is part of the stalk that links CF(0) to CF(1). It either transmits conformational changes from CF(0) to CF(1) or is implicated in proton conduction. The sequence is that of ATP synthase subunit delta from Histophilus somni (strain 2336) (Haemophilus somnus).